Reading from the N-terminus, the 301-residue chain is Mating type protein mtA-1 (301 aa).

The segment at residues 49-104 (APKKKVNGFMGFRSYYSSLFSQFPQKARSPFMTILWQHDPFHNEWDFMCSVYSSIR) is a DNA-binding region (alpha box).

Belongs to the MATALPHA1 family.

Its subcellular location is the nucleus. Functionally, mating type proteins are sequence specific DNA-binding proteins that act as master switches in fungal differentiation by controlling gene expression in a cell type-specific fashion. Transcriptional activator that induces the transcription of alpha-specific genes. The protein is Mating type protein mtA-1 (MTA1) of Sordaria fimicola.